The following is a 132-amino-acid chain: Small ribosomal subunit protein uS11 (132 aa).

The protein belongs to the universal ribosomal protein uS11 family. Part of the 30S ribosomal subunit. Interacts with proteins S7 and S18. Binds to IF-3.

Located on the platform of the 30S subunit, it bridges several disparate RNA helices of the 16S rRNA. Forms part of the Shine-Dalgarno cleft in the 70S ribosome. In Clostridium botulinum (strain 657 / Type Ba4), this protein is Small ribosomal subunit protein uS11.